The following is a 290-amino-acid chain: Dehydrodolichyl diphosphate synthase CPT3 (290 aa).

Residue aspartate 42 is part of the active site.

It belongs to the UPP synthase family. The cofactor is Mg(2+). As to expression, expressed in leaf trichomes and stem trichomes. Expressed at low levels in young leaves, stems and old leaves.

It is found in the cytoplasm. The protein localises to the cytosol. It carries out the reaction n isopentenyl diphosphate + (2E,6E)-farnesyl diphosphate = a di-trans,poly-cis-polyprenyl diphosphate + n diphosphate. Functionally, catalyzes cis-prenyl chain elongation to produce the polyprenyl backbone of dolichol, a glycosyl carrier-lipid required for the biosynthesis of several classes of glycoprotein. The polypeptide is Dehydrodolichyl diphosphate synthase CPT3 (Solanum lycopersicum (Tomato)).